Here is a 307-residue protein sequence, read N- to C-terminus: Ribonuclease Z (307 aa).

Zn(2+) is bound by residues His-63, His-65, Asp-67, His-68, His-143, Asp-213, and His-271. The active-site Proton acceptor is Asp-67.

It belongs to the RNase Z family. In terms of assembly, homodimer. It depends on Zn(2+) as a cofactor.

The catalysed reaction is Endonucleolytic cleavage of RNA, removing extra 3' nucleotides from tRNA precursor, generating 3' termini of tRNAs. A 3'-hydroxy group is left at the tRNA terminus and a 5'-phosphoryl group is left at the trailer molecule.. Zinc phosphodiesterase, which displays some tRNA 3'-processing endonuclease activity. Probably involved in tRNA maturation, by removing a 3'-trailer from precursor tRNA. In Lactococcus lactis subsp. cremoris (strain SK11), this protein is Ribonuclease Z.